The following is a 970-amino-acid chain: MAEAFIQVLLDNLTSFLKGELVLLFGFQDEFQRLSSMFSTIQAVLEDAQEKQLNNKPLENWLQKLNAATYEVDDILDEYKTKATRFSQSEYGRYHPKVIPFRHKVGKRMDQVMKKLKAIAEERKNFHLHEKIVERQAVRRETGSVLTEPQVYGRDKEKDEIVKILINNVSDAQHLSVLPILGMGGLGKTTLAQMVFNDQRVTEHFHSKIWICVSEDFDEKRLIKAIVESIEGRPLLGEMDLAPLQKKLQELLNGKRYLLVLDDVWNEDQQKWANLRAVLKVGASGASVLTTTRLEKVGSIMGTLQPYELSNLSQEDCWLLFMQRAFGHQEEINPNLVAIGKEIVKKSGGVPLAAKTLGGILCFKREERAWEHVRDSPIWNLPQDESSILPALRLSYHQLPLDLKQCFAYCAVFPKDAKMEKEKLISLWMAHGFLLSKGNMELEDVGDEVWKELYLRSFFQEIEVKDGKTYFKMHDLIHDLATSLFSANTSSSNIREINKHSYTHMMSIGFAEVVFFYTLPPLEKFISLRVLNLGDSTFNKLPSSIGDLVHLRYLNLYGSGMRSLPKQLCKLQNLQTLDLQYCTKLCCLPKETSKLGSLRNLLLDGSQSLTCMPPRIGSLTCLKTLGQFVVGRKKGYQLGELGNLNLYGSIKISHLERVKNDKDAKEANLSAKGNLHSLSMSWNNFGPHIYESEEVKVLEALKPHSNLTSLKIYGFRGIHLPEWMNHSVLKNIVSILISNFRNCSCLPPFGDLPCLESLELHWGSADVEYVEEVDIDVHSGFPTRIRFPSLRKLDIWDFGSLKGLLKKEGEEQFPVLEEMIIHECPFLTLSSNLRALTSLRICYNKVATSFPEEMFKNLANLKYLTISRCNNLKELPTSLASLNALKSLKIQLCCALESLPEEGLEGLSSLTELFVEHCNMLKCLPEGLQHLTTLTSLKIRGCPQLIKRCEKGIGEDWHKISHIPNVNIYI.

Positions 135 to 438 constitute an NB-ARC domain; it reads RQAVRRETGS…MAHGFLLSKG (304 aa). 182-189 lines the ATP pocket; it reads GMGGLGKT. LRR repeat units follow at residues 525–548, 550–571, 573–594, 595–619, 638–662, 672–697, 752–777, 787–811, 813–832, 833–857, 859–882, 884–906, 907–931, and 946–970; these read FISLRVLNLGDSTFNKLPSSIGDL, HLRYLNLYGSGMRSLPKQLCKL, NLQTLDLQYCTKLCCLPKETSK, LGSLRNLLLDGSQSLTCMPPRIGSL, LGELGNLNLYGSIKISHLERVKNDK, KGNLHSLSMSWNNFGPHIYESEEVKV, LPCLESLELHWGSADVEYVEEVDIDV, FPSLRKLDIWDFGSLKGLLKKEGEE, FPVLEEMIIHECPFLTLSSN, LRALTSLRICYNKVATSFPEEMFKN, ANLKYLTISRCNNLKELPTSLASL, ALKSLKIQLCCALESLPEEGLEG, LSSLTELFVEHCNMLKCLPEGLQHL, and IKRCEKGIGEDWHKISHIPNVNIYI.

This sequence belongs to the disease resistance NB-LRR family.

In terms of biological role, disease resistance protein. Resistance proteins guard the plant against pathogens that contain an appropriate avirulence protein via a direct or indirect interaction with this avirulence protein. That triggers a defense system which restricts the pathogen growth. Confers a broad resistance to all known races of P.infestans. This is Disease resistance protein RGA2 (RGA2) from Solanum bulbocastanum (Wild potato).